The sequence spans 561 residues: Transcription factor Clamp (561 aa).

The C2H2-type 1 zinc-finger motif lies at 127–149 (FKCDVCSDMFPHLALLNAHKRMH). Cysteine 129, cysteine 132, histidine 145, and histidine 149 together coordinate Zn(2+). The disordered stretch occupies residues 290 to 315 (TGGTTPKREASSGSGHHPVKKRNSQQ). 6 consecutive C2H2-type zinc fingers follow at residues 360-382 (FSCN…KKLH), 388-410 (YKCS…ARIH), 416-438 (YKCQ…ERTH), 444-466 (YVCG…RRIH), 472-494 (YKCE…AKVH), and 500-522 (YKCE…RGIH).

In terms of assembly, homodimer. Interacts with msl-2; promoting recruitment of the male-specific lethal (MSL) histone acetyltransferase complex to chromatin. Interacts with Nelf-A. Interacts with NELF-B.

It is found in the nucleus. The protein localises to the chromosome. Functionally, transcription factor involved in X-chromosome dosage compensation in males, the process by which transcription of the single X chromosome in the male is elevated. Binds to the DNA sequence (GA)n. Clamp-binding promotes nucleosome depletion and chromatin accessibility, thereby allowing access to other transcription factors. Specifically binds to cis-acting elements on the X-chromosome named chromatin entry sites and promotes recruitment of the male-specific lethal (MSL) histone acetyltransferase complex, which associates with actively transcribed genes on the male X-chromosome to upregulate their expression. Mechanistically, acts by promoting chromatin accessibility at chromatin entry sites, facilitating DNA-binding of msl-2, followed by MSL complex recruitment. In addition to dosage compensation, also involved in zygotic genome activation (ZGA), a critical event in early embryonic development during which the developmental control passes from maternally provided mRNAs to the expression of the zygotic genome after fertilization. Maternally-provided protein cooperates with Zelda (zld) to activate zygotic transcription by increasing chromatin accessibility at promoters of specific genes and facilitate zld occupancy at a subset of key embryonic promoters. Also acts as an activator of gypsy chromatin insulator function by promoting binding of Cp190 to chromatin. This is Transcription factor Clamp from Drosophila melanogaster (Fruit fly).